A 177-amino-acid polypeptide reads, in one-letter code: MKAETTTGVEELLNELVGRAAGEVGLILFSLGIEGEFTDDQLSLELGIEINEIRKALFALYEIGLADYVRRRDDETGWMEYYWRINYDKALDVLKRELEKTAKKLREKIEAETSTIYYICPNMCVKVSYNDAMELNFTCPRCGAMLDYLDCSKAIEKIEEEVRRIEEILESLDKNSG.

One can recognise an HTH TFE/IIEalpha-type domain in the interval 9 to 91 (VEELLNELVG…YWRINYDKAL (83 aa)).

This sequence belongs to the TFE family. As to quaternary structure, monomer. Interaction with RNA polymerase subunits RpoF and RpoE is necessary for Tfe stimulatory transcription activity. Able to interact with Tbp and RNA polymerase in the absence of DNA promoter. Interacts both with the preinitiation and elongation complexes.

Transcription factor that plays a role in the activation of archaeal genes transcribed by RNA polymerase. Facilitates transcription initiation by enhancing TATA-box recognition by TATA-box-binding protein (Tbp), and transcription factor B (Tfb) and RNA polymerase recruitment. Not absolutely required for transcription in vitro, but particularly important in cases where Tbp or Tfb function is not optimal. It dynamically alters the nucleic acid-binding properties of RNA polymerases by stabilizing the initiation complex and destabilizing elongation complexes. Seems to translocate with the RNA polymerase following initiation and acts by binding to the non template strand of the transcription bubble in elongation complexes. The sequence is that of Transcription factor E from Archaeoglobus fulgidus (strain ATCC 49558 / DSM 4304 / JCM 9628 / NBRC 100126 / VC-16).